Consider the following 147-residue polypeptide: uncharacterized protein (147 aa).

A helical membrane pass occupies residues 13-35; that stretch reads NSRINLLGILVLNVVCGKSSIFF.

The protein localises to the membrane. This is an uncharacterized protein from Saccharomyces cerevisiae (strain ATCC 204508 / S288c) (Baker's yeast).